The primary structure comprises 481 residues: Transcription factor TGA9 (481 aa).

Residues 91 to 181 (QTLPTESSKS…GKQLDAKTLR (91 aa)) form a disordered region. The span at 97 to 109 (SSKSGGESSDSGS) shows a compositional bias: low complexity. Positions 110–126 (ANFSGKAESQQPESPMS) are enriched in polar residues. Positions 143 to 155 (SSSTSGLPSTSRT) are enriched in low complexity. A Nuclear localization signal motif is present at residues 165–172 (KRKATTSG). The 45-residue stretch at 176–220 (DAKTLRRLAQNREAARKSRLRKKAYVQQLESSRIKLSQLEQELQR) folds into the bZIP domain. Positions 178 to 198 (KTLRRLAQNREAARKSRLRKK) are basic motif. The segment at 204-218 (LESSRIKLSQLEQEL) is leucine-zipper. Residues 242 to 450 (AAIFDMEYGR…RALSSLWLSR (209 aa)) form the DOG1 domain.

Belongs to the bZIP family. In terms of assembly, homodimer. Binds DNA as a dimer. Interacts with floral glutaredoxins GRXC7/ROXY1 and GRXC8/ROXY2 in the nucleus. Interacts with TGA1, TGA2, TGA3, TGA4, TGA5, TGA6, TGA7, TGA10 and PAN. Mostly expressed in stems, inflorescence apex and flowers, and, to a lower extent, in seedlings, leaves and siliques.

It localises to the nucleus. In terms of biological role, together with TGA10, basic leucine-zipper transcription factor required for anther development, probably via the activation of SPL expression in anthers and via the regulation of genes with functions in early and middle tapetal development. Required for signaling responses to pathogen-associated molecular patterns (PAMPs) such as flg22 that involves chloroplastic reactive oxygen species (ROS) production and subsequent expression of H(2)O(2)-responsive genes. This Arabidopsis thaliana (Mouse-ear cress) protein is Transcription factor TGA9.